The chain runs to 276 residues: 3' cyclic ADP-D-ribose synthase HopAM1 (276 aa).

Positions 20-38 (VEASQVKSAGTSSTTNIDS) are enriched in polar residues. A disordered region spans residues 20-39 (VEASQVKSAGTSSTTNIDSK). Residues 165 to 214 (KNGIAHAKKMAFFITPEWLGSDFCKQEFQWLSETKNKDIKSAFVIFKDVD) are TIR domain. Gln190 is a catalytic residue.

As to quaternary structure, homodimer.

The protein resides in the host cytoplasm. It localises to the host cytosol. The enzyme catalyses NAD(+) = 3'cADPR + nicotinamide + H(+). NAD(+) hydrolase (NADase) that cleaves NAD(+) into nicotinamide and 3' cyclic ADP-D-ribose (3'cADPR, v2-cADPR). Upon infiltration of A.thaliana with this bacteria an effector-triggered immunity-like phenotype (ETI-like, cell death with severe chlorosis) is seen, 3'cADPR levels rise while NAD(+) levels remain constant. Plant immune responses are suppressed. Triggers hypersensitive response-like cell death in Nicotiana tabacum cv. Xanthi and N.benthamiana when transiently expressed, depletes NAD(+) in N.benthamiana. Causes cell death upon induction in yeast due to NAD(+) depletion and/or 3'cADPR itself. Transgenic A.thaliana expressing HopAM1 suppresses its plant immune system upon challenge; the plants produce 3'cADPR without significantly depleting NAD(+). In Pseudomonas syringae pv. tomato (strain ATCC BAA-871 / DC3000), this protein is 3' cyclic ADP-D-ribose synthase HopAM1.